A 112-amino-acid chain; its full sequence is Large ribosomal subunit protein bL20c (112 aa).

It belongs to the bacterial ribosomal protein bL20 family.

It localises to the plastid. The protein localises to the chloroplast. Functionally, binds directly to 23S ribosomal RNA and is necessary for the in vitro assembly process of the 50S ribosomal subunit. It is not involved in the protein synthesizing functions of that subunit. In Chlamydomonas reinhardtii (Chlamydomonas smithii), this protein is Large ribosomal subunit protein bL20c (rpl20).